Reading from the N-terminus, the 422-residue chain is tRNA hydroxylation protein P (422 aa).

The first 58 residues, 1–58 (MNQVELLSPAGNLKKLKIALNYGADAVYGGVSHFSLRNRAGKEFTLETFKEGIDYAHA), serve as a signal peptide directing secretion.

This sequence belongs to the peptidase U32 family.

In terms of biological role, involved in prephenate-dependent formation of 5-hydroxyuridine (ho5U) modification at position 34 in tRNAs, the first step in 5-carboxymethoxyuridine (cmo5U) biosynthesis. The chain is tRNA hydroxylation protein P from Helicobacter pylori (strain J99 / ATCC 700824) (Campylobacter pylori J99).